The sequence spans 342 residues: Anthranilate phosphoribosyltransferase (342 aa).

5-phospho-alpha-D-ribose 1-diphosphate contacts are provided by residues Gly-83, 86-87 (GD), Thr-91, 93-96 (NIST), 111-119 (KHGGRSVSS), and Ser-123. Gly-83 is a binding site for anthranilate. Ser-95 contacts Mg(2+). Residue Arg-169 coordinates anthranilate. Residues Asp-228 and Glu-229 each contribute to the Mg(2+) site.

The protein belongs to the anthranilate phosphoribosyltransferase family. As to quaternary structure, homodimer. Requires Mg(2+) as cofactor.

It catalyses the reaction N-(5-phospho-beta-D-ribosyl)anthranilate + diphosphate = 5-phospho-alpha-D-ribose 1-diphosphate + anthranilate. The protein operates within amino-acid biosynthesis; L-tryptophan biosynthesis; L-tryptophan from chorismate: step 2/5. In terms of biological role, catalyzes the transfer of the phosphoribosyl group of 5-phosphorylribose-1-pyrophosphate (PRPP) to anthranilate to yield N-(5'-phosphoribosyl)-anthranilate (PRA). In Chromobacterium violaceum (strain ATCC 12472 / DSM 30191 / JCM 1249 / CCUG 213 / NBRC 12614 / NCIMB 9131 / NCTC 9757 / MK), this protein is Anthranilate phosphoribosyltransferase.